The following is a 251-amino-acid chain: 3-deoxy-manno-octulosonate cytidylyltransferase (251 aa).

The protein belongs to the KdsB family.

It is found in the cytoplasm. It carries out the reaction 3-deoxy-alpha-D-manno-oct-2-ulosonate + CTP = CMP-3-deoxy-beta-D-manno-octulosonate + diphosphate. It functions in the pathway nucleotide-sugar biosynthesis; CMP-3-deoxy-D-manno-octulosonate biosynthesis; CMP-3-deoxy-D-manno-octulosonate from 3-deoxy-D-manno-octulosonate and CTP: step 1/1. Its pathway is bacterial outer membrane biogenesis; lipopolysaccharide biosynthesis. Its function is as follows. Activates KDO (a required 8-carbon sugar) for incorporation into bacterial lipopolysaccharide in Gram-negative bacteria. The sequence is that of 3-deoxy-manno-octulosonate cytidylyltransferase from Geotalea uraniireducens (strain Rf4) (Geobacter uraniireducens).